Consider the following 361-residue polypeptide: UDP-N-acetylglucosamine--N-acetylmuramyl-(pentapeptide) pyrophosphoryl-undecaprenol N-acetylglucosamine transferase (361 aa).

Residues 12–14 (TGG), N126, R167, S192, I247, and Q292 each bind UDP-N-acetyl-alpha-D-glucosamine.

This sequence belongs to the glycosyltransferase 28 family. MurG subfamily.

Its subcellular location is the cell inner membrane. The enzyme catalyses di-trans,octa-cis-undecaprenyl diphospho-N-acetyl-alpha-D-muramoyl-L-alanyl-D-glutamyl-meso-2,6-diaminopimeloyl-D-alanyl-D-alanine + UDP-N-acetyl-alpha-D-glucosamine = di-trans,octa-cis-undecaprenyl diphospho-[N-acetyl-alpha-D-glucosaminyl-(1-&gt;4)]-N-acetyl-alpha-D-muramoyl-L-alanyl-D-glutamyl-meso-2,6-diaminopimeloyl-D-alanyl-D-alanine + UDP + H(+). The protein operates within cell wall biogenesis; peptidoglycan biosynthesis. Cell wall formation. Catalyzes the transfer of a GlcNAc subunit on undecaprenyl-pyrophosphoryl-MurNAc-pentapeptide (lipid intermediate I) to form undecaprenyl-pyrophosphoryl-MurNAc-(pentapeptide)GlcNAc (lipid intermediate II). In Syntrophus aciditrophicus (strain SB), this protein is UDP-N-acetylglucosamine--N-acetylmuramyl-(pentapeptide) pyrophosphoryl-undecaprenol N-acetylglucosamine transferase.